The chain runs to 190 residues: Protein LIGHT-DEPENDENT SHORT HYPOCOTYLS 1 (190 aa).

Over residues 1–26 the composition is skewed to polar residues; sequence MDLISHQPNKNPNSSTQLTPPSSSRY. Disordered stretches follow at residues 1–28 and 145–190; these read MDLI…RYEN and GVSY…GATV. Positions 25 to 152 constitute an ALOG domain; sequence RYENQKRRDW…ARGVSYEKKR (128 aa). A Nuclear localization signal motif is present at residues 150–154; sequence KKRKR. A compositionally biased stretch (low complexity) spans 158-179; it reads QKPQTQPPLQLQQQQQQPQQGQ. Over residues 180 to 190 the composition is skewed to polar residues; that stretch reads SMMANYSGATV.

The protein belongs to the plant homeotic and developmental regulators ALOG protein family. As to expression, expressed in hypocotyls, shoot apices and lateral root primordia and, weakly, in vascular tissues.

Its subcellular location is the nucleus. Probable transcription regulator that acts as a developmental regulator by promoting cell growth in response to continuous red (cR), far-red (cFR) and blue (cB) light in a phytochrome-dependent manner, at least during seedling development. The sequence is that of Protein LIGHT-DEPENDENT SHORT HYPOCOTYLS 1 (LSH1) from Arabidopsis thaliana (Mouse-ear cress).